We begin with the raw amino-acid sequence, 379 residues long: MVVKQKADYAALKEELIAYAYEIGIQKIGFTTADPFLFLKERLLEAEALDLFTGFEHPVIEERVYPELIFKEPQSIIAIALAYPSKLKEAPVSKKGARRGVFARASWGIDYHTVLREKLALLETFLIERLPDVRMKSMVDTGELSDVAVAERAGIGWRGKNTLLITPEYGSWVYLGEMITNIPFEPDTPASDLCGSCNQCVKACPTGSLLGEGKMNPKICLSYLTQTKDFLDEKYREVLHNRLYGCDTCQVVCPYNRGHDFHFHEEMEPDPELVRPELKPLLHISNRAFKEQFGDMAGSWRGKKPIQRNAIIILARYKDKTAVPDLIDCLQNDPRPVIRGTAGWALRKIGGRDAEEAVERALQTEQDVQVLQELTAIPN.

Asp-140 acts as the Proton donor in catalysis. Residues 184 to 214 (FEPDTPASDLCGSCNQCVKACPTGSLLGEGK) enclose the 4Fe-4S ferredoxin-type domain. [4Fe-4S] cluster is bound by residues Cys-194, Cys-197, Cys-200, Cys-204, Cys-220, Cys-246, Cys-249, and Cys-253. The HEAT-like PBS-type repeat unit spans residues 307 to 332 (QRNAIIILARYKDKTAVPDLIDCLQN).

This sequence belongs to the QueG family. In terms of assembly, monomer. It depends on cob(II)alamin as a cofactor. The cofactor is [4Fe-4S] cluster.

It is found in the cytoplasm. It catalyses the reaction epoxyqueuosine(34) in tRNA + AH2 = queuosine(34) in tRNA + A + H2O. It participates in tRNA modification; tRNA-queuosine biosynthesis. Its function is as follows. Catalyzes the conversion of epoxyqueuosine (oQ) to queuosine (Q), which is a hypermodified base found in the wobble positions of tRNA(Asp), tRNA(Asn), tRNA(His) and tRNA(Tyr). This chain is Epoxyqueuosine reductase, found in Listeria monocytogenes serovar 1/2a (strain ATCC BAA-679 / EGD-e).